The sequence spans 44 residues: Putative protein PsbN (44 aa).

A helical transmembrane segment spans residues 3–23; that stretch reads IISFLSTIFLGFFIISTTIYS.

The protein belongs to the PsbN family.

Its subcellular location is the plastid. It is found in the chloroplast thylakoid membrane. Its function is as follows. May play a role in photosystem I and II biogenesis. The protein is Putative protein PsbN of Euglena gracilis.